A 577-amino-acid polypeptide reads, in one-letter code: Insulin-like growth factor 2 mRNA-binding protein 1 (577 aa).

RRM domains follow at residues 2-75 (NKLY…HSVP) and 81-156 (RKIQ…YIPD). 2 positions are modified to phosphoserine: serine 12 and serine 73. Residues 160–190 (AQGPENGRRGGFGSRGQPRQGSPVAAGAPAK) are disordered. A Phosphoserine modification is found at serine 181. KH domains are found at residues 195-260 (DIPL…CKMI), 276-343 (EVPL…EQEI), 405-470 (QEMV…QGRI), and 487-553 (KLET…QRKI). The tract at residues 310–324 (ITISSLQDLTLYNPE) is sufficient for nuclear export. Residues 485-495 (EVKLETHIRVP) are sufficient for nuclear export. At threonine 528 the chain carries Phosphothreonine.

Belongs to the RRM IMP/VICKZ family. As to quaternary structure, can form homodimers and heterodimers with IGF2BP1 and IGF2BP3. Component of the coding region determinant (CRD)-mediated complex, composed of DHX9, HNRNPU, IGF2BP1, SYNCRIP and YBX1. During HCV infection, identified in a HCV IRES-mediated translation complex, at least composed of EIF3C, IGF2BP1, RPS3 and HCV RNA-replicon. Interacts (via the KH domains) with HIV-1 GAG (via the second zinc finger motif of NC). Associates (via the RRM domains and KH domains) with HIV-1 particles. Identified in a mRNP complex, composed of at least DHX9, DDX3X, ELAVL1, HNRNPU, IGF2BP1, ILF3, PABPC1, PCBP2, PTBP2, STAU1, STAU2, SYNCRIP and YBX1. Identified in a IGF2BP1-dependent mRNP granule complex containing untranslated mRNAs. Interacts with DHX9, ELAVL2, HNRNPA2B1, HNRNPC, HNRNPH1, HNRNPU, IGF2BP2, ILF2, and YBX1. Interacts with FMR1. Component of a multisubunit autoregulatory RNP complex (ARC), at least composed of IGF2BP1, PABPC1 and CSDE1/UNR. Directly interacts with PABPC1. Component of a TAU mRNP complex, at least composed of IGF2BP1, ELAVL4 and G3BP. Interacts with ELAVL4 in an RNA-dependent manner. Associates with microtubules and polysomes. Interacts with AGO1 and AGO2. Interacts with ELAVL1 and MATR3. Interacts (via KH3 and KH4 domains) with SEPIN14P20 peptide RBRP; the interaction results in increased binding of IGF2BP1 to N6-methyladenosine (m6A)-containing mRNAs. Phosphorylated at Ser-181 by mTORC2 cotranslationally, promoting binding to the 3'-UTR of IGF2 mRNA. As to expression, mainly expressed in the embryo, including in fetal liver, fetal lung, fetal kidney, fetal thymus (at protein level). Also expressed follicles of ovary, as well as in gonocytes of testis, spermatogonia, semen, oocytes and placenta (at protein level). Expressed in various cancers, including testis and lung cancers (at protein level), as well as kidney, prostate and trachea cancers.

It localises to the nucleus. Its subcellular location is the cytoplasm. The protein resides in the perinuclear region. It is found in the P-body. The protein localises to the stress granule. It localises to the cell projection. Its subcellular location is the lamellipodium. The protein resides in the dendrite. It is found in the dendritic spine. The protein localises to the growth cone. It localises to the filopodium. Its subcellular location is the axon. RNA-binding factor that recruits target transcripts to cytoplasmic protein-RNA complexes (mRNPs). This transcript 'caging' into mRNPs allows mRNA transport and transient storage. It also modulates the rate and location at which target transcripts encounter the translational apparatus and shields them from endonuclease attacks or microRNA-mediated degradation. Preferentially binds to N6-methyladenosine (m6A)-containing mRNAs and increases their stability. Plays a direct role in the transport and translation of transcripts required for axonal regeneration in adult sensory neurons. Regulates localized beta-actin/ACTB mRNA translation, a crucial process for cell polarity, cell migration and neurite outgrowth. Co-transcriptionally associates with the ACTB mRNA in the nucleus. This binding involves a conserved 54-nucleotide element in the ACTB mRNA 3'-UTR, known as the 'zipcode'. The RNP thus formed is exported to the cytoplasm, binds to a motor protein and is transported along the cytoskeleton to the cell periphery. During transport, prevents ACTB mRNA from being translated into protein. When the RNP complex reaches its destination near the plasma membrane, IGF2BP1 is phosphorylated. This releases the mRNA, allowing ribosomal 40S and 60S subunits to assemble and initiate ACTB protein synthesis. Monomeric ACTB then assembles into the subcortical actin cytoskeleton. During neuronal development, key regulator of neurite outgrowth, growth cone guidance and neuronal cell migration, presumably through the spatiotemporal fine tuning of protein synthesis, such as that of ACTB. May regulate mRNA transport to activated synapses. Binds to and stabilizes ABCB1/MDR-1 mRNA. During interstinal wound repair, interacts with and stabilizes PTGS2 transcript. PTGS2 mRNA stabilization may be crucial for colonic mucosal wound healing. Binds to the 3'-UTR of IGF2 mRNA by a mechanism of cooperative and sequential dimerization and regulates IGF2 mRNA subcellular localization and translation. Binds to MYC mRNA, in the coding region instability determinant (CRD) of the open reading frame (ORF), hence preventing MYC cleavage by endonucleases and possibly microRNA targeting to MYC-CRD. Binding to MYC mRNA is enhanced by m6A-modification of the CRD. Binds to the 3'-UTR of CD44 mRNA and stabilizes it, hence promotes cell adhesion and invadopodia formation in cancer cells. Binds to the oncofetal H19 transcript and to the neuron-specific TAU mRNA and regulates their localizations. Binds to and stabilizes BTRC/FBW1A mRNA. Binds to the adenine-rich autoregulatory sequence (ARS) located in PABPC1 mRNA and represses its translation. PABPC1 mRNA-binding is stimulated by PABPC1 protein. Prevents BTRC/FBW1A mRNA degradation by disrupting microRNA-dependent interaction with AGO2. Promotes the directed movement of tumor-derived cells by fine-tuning intracellular signaling networks. Binds to MAPK4 3'-UTR and inhibits its translation. Interacts with PTEN transcript open reading frame (ORF) and prevents mRNA decay. This combined action on MAPK4 (down-regulation) and PTEN (up-regulation) antagonizes HSPB1 phosphorylation, consequently it prevents G-actin sequestration by phosphorylated HSPB1, allowing F-actin polymerization. Hence enhances the velocity of cell migration and stimulates directed cell migration by PTEN-modulated polarization. Interacts with Hepatitis C virus (HCV) 5'-UTR and 3'-UTR and specifically enhances translation at the HCV IRES, but not 5'-cap-dependent translation, possibly by recruiting eIF3. Interacts with HIV-1 GAG protein and blocks the formation of infectious HIV-1 particles. Reduces HIV-1 assembly by inhibiting viral RNA packaging, as well as assembly and processing of GAG protein on cellular membranes. During cellular stress, such as oxidative stress or heat shock, stabilizes target mRNAs that are recruited to stress granules, including CD44, IGF2, MAPK4, MYC, PTEN, RAPGEF2 and RPS6KA5 transcripts. This chain is Insulin-like growth factor 2 mRNA-binding protein 1 (IGF2BP1), found in Homo sapiens (Human).